The following is a 321-amino-acid chain: GTP 3',8-cyclase (321 aa).

Residues 5-233 form the Radical SAM core domain; sequence SFNRVIDYIR…QGSSKIYTLE (229 aa). Arginine 14 lines the GTP pocket. [4Fe-4S] cluster contacts are provided by cysteine 21 and cysteine 25. Tyrosine 27 serves as a coordination point for S-adenosyl-L-methionine. Residue cysteine 28 coordinates [4Fe-4S] cluster. Arginine 64 serves as a coordination point for GTP. Glycine 68 contacts S-adenosyl-L-methionine. Residue serine 95 participates in GTP binding. S-adenosyl-L-methionine is bound at residue serine 119. Lysine 155 is a binding site for GTP. Methionine 189 is an S-adenosyl-L-methionine binding site. Cysteine 249 and cysteine 252 together coordinate [4Fe-4S] cluster. GTP is bound at residue 254 to 256; the sequence is RIR. Position 266 (cysteine 266) interacts with [4Fe-4S] cluster.

This sequence belongs to the radical SAM superfamily. MoaA family. Monomer and homodimer. [4Fe-4S] cluster is required as a cofactor.

The enzyme catalyses GTP + AH2 + S-adenosyl-L-methionine = (8S)-3',8-cyclo-7,8-dihydroguanosine 5'-triphosphate + 5'-deoxyadenosine + L-methionine + A + H(+). It participates in cofactor biosynthesis; molybdopterin biosynthesis. In terms of biological role, catalyzes the cyclization of GTP to (8S)-3',8-cyclo-7,8-dihydroguanosine 5'-triphosphate. This chain is GTP 3',8-cyclase, found in Helicobacter pylori (strain ATCC 700392 / 26695) (Campylobacter pylori).